A 131-amino-acid chain; its full sequence is Small ribosomal subunit protein uS11 (131 aa).

It belongs to the universal ribosomal protein uS11 family. In terms of assembly, part of the 30S ribosomal subunit.

Its function is as follows. Located on the platform of the 30S subunit. The protein is Small ribosomal subunit protein uS11 of Haloquadratum walsbyi (strain DSM 16790 / HBSQ001).